A 160-amino-acid polypeptide reads, in one-letter code: Cytochrome b6-f complex subunit 4 (160 aa).

3 helical membrane-spanning segments follow: residues Leu-36–Val-56, Leu-95–Glu-115, and Thr-131–Ile-151.

It belongs to the cytochrome b family. PetD subfamily. As to quaternary structure, the 4 large subunits of the cytochrome b6-f complex are cytochrome b6, subunit IV (17 kDa polypeptide, petD), cytochrome f and the Rieske protein, while the 4 small subunits are petG, petL, petM and petN. The complex functions as a dimer.

The protein localises to the plastid. Its subcellular location is the chloroplast thylakoid membrane. Component of the cytochrome b6-f complex, which mediates electron transfer between photosystem II (PSII) and photosystem I (PSI), cyclic electron flow around PSI, and state transitions. The chain is Cytochrome b6-f complex subunit 4 from Tetradesmus obliquus (Green alga).